The following is a 654-amino-acid chain: MSAPLIELCDIRKAYGGIDSPKVEVLRGISLSIHPGEFVAIVGASGSGKSTLMNILGCLDRPTSGSYRFAGRDVAELDSDELAWLRREAFGFVFQGYHLIPSGSAQENVEMPAIYAGTPPAERHARALALLDRLGLASRTGNRPHQLSGGQQQRVSIARALMNGGHIILADEPTGALDSHSGAEVMALLDELASQGHVIILITHDREVAARAQRIIEIRDGQMVSDSAASQPSPAQPEQLQANDLRQRLDRGAILKGAWKGEMIEALQAAWRVMWINRFRTALTLLGIIIGVASVVVMLAVGEGSKRQVMAQMAAFGSNILYLNGKRATAQEPGGIVTLDDVAAIGELPQVLHVMPVIGGQLMVRQGNSSQKFYVGGNNTWFPAIFNWPVVEGTFFSEADEASGAAVAVIGQKVRSKMFGEGSNPLGQYLLIGNVPFQVVGILAAKGASSGSEDSDERIVVPYSAASIRLFGSHDPEYVAIAAIDSRRVNETEAAIDRLLRQRHQGKHDFDLTNDAALIQAEARTQNSLSLMLGAIAAISLLVGGIGVMNIMLMTVRERTREIGIRMATGARQRDILRQFLTEAVMLSMVGGVTGIVIALLVGGGLLLADIAVAFALPAILGAFACAVITGVVFGFMPARKAARLDPVKALTSE.

The region spanning 6 to 245 (IELCDIRKAY…QPEQLQANDL (240 aa)) is the ABC transporter domain. 43-50 (GASGSGKS) is a binding site for ATP. The next 4 membrane-spanning stretches (helical) occupy residues 282–302 (ALTL…LAVG), 529–549 (LSLM…IGVM), 596–616 (IVIA…VAFA), and 617–637 (LPAI…FGFM).

It belongs to the ABC transporter superfamily. Macrolide exporter (TC 3.A.1.122) family. As to quaternary structure, part of the tripartite efflux system PvdRT-OpmQ, which is composed of an inner membrane component with both ATPase and permease domains, PvdT, a periplasmic membrane fusion protein, PvdR, and an outer membrane component, OpmQ.

It localises to the cell inner membrane. Its function is as follows. Part of the tripartite efflux system PvdRT-OpmQ required for the secretion into the extracellular milieu of the siderophore pyoverdine (PVD), which is involved in iron acquisition. This subunit binds PVD and drives its secretion by hydrolyzing ATP. The system is responsible for export of newly synthesized PVD after the final steps of biosynthesis have taken place in the periplasm. It is also responsible for recycling of PVD after internalization of ferri-PVD into the periplasm by the outer-membrane receptor FpvA and release of iron from PVD, thus making PVD available for new cycles of iron uptake. The protein is Pyoverdine export ATP-binding/permease protein PvdT of Pseudomonas entomophila (strain L48).